The following is a 686-amino-acid chain: Acyl-CoA synthetase short-chain family member 3, mitochondrial (686 aa).

Residues 1–29 (MKPSWLQCRKVTGAGGLGGSLPASSPARG) constitute a mitochondrion transit peptide. 226–229 (EPGR) lines the CoA pocket. Residues 424–426 (GER) and 445–450 (DHWWQT) contribute to the ATP site. The residue at position 517 (Lys517) is an N6-succinyllysine. Lys523 is modified (N6-acetyllysine). 3 residues coordinate ATP: Asp538, Arg553, and Arg564. Arg623 serves as a coordination point for CoA.

Belongs to the ATP-dependent AMP-binding enzyme family.

The protein localises to the mitochondrion matrix. It carries out the reaction acetate + ATP + CoA = acetyl-CoA + AMP + diphosphate. The catalysed reaction is propanoate + ATP + CoA = propanoyl-CoA + AMP + diphosphate. It catalyses the reaction butanoate + ATP + CoA = butanoyl-CoA + AMP + diphosphate. Catalyzes the synthesis of acetyl-CoA from short-chain fatty acids. Propionate is the preferred substrate but can also utilize acetate and butyrate with a much lower affinity. This chain is Acyl-CoA synthetase short-chain family member 3, mitochondrial (ACSS3), found in Bos taurus (Bovine).